The chain runs to 128 residues: MGKAYYVKFETPEDLVNPILEAVRVASTSGKVKKGTNEATKAIERGTSKLIVIAEDVEPPEVVAHLPILCEEQGAAFAFVPSKQELGKSLGIDITSAAAAILDAGDAQHIVDQVVSSIAKIKGGKTDQ.

This sequence belongs to the eukaryotic ribosomal protein eL8 family. In terms of assembly, part of the 50S ribosomal subunit. Probably part of the RNase P complex.

It localises to the cytoplasm. Its function is as follows. Multifunctional RNA-binding protein that recognizes the K-turn motif in ribosomal RNA, the RNA component of RNase P, box H/ACA, box C/D and box C'/D' sRNAs. This chain is Large ribosomal subunit protein eL8, found in Nitrosopumilus maritimus (strain SCM1).